A 413-amino-acid chain; its full sequence is Metacaspase-1A (413 aa).

The interval 1-104 is disordered; the sequence is MQNHHHQQSS…PTDPVAFGHG (104 aa). The segment covering 36-47 has biased composition (pro residues); it reads SPQPGYGAPPPH. The segment covering 49-58 has biased composition (low complexity); the sequence is GYGQPPSGYG. Residues 75–85 are compositionally biased toward polar residues; sequence GMNQYQNTYSH. Active-site residues include H204 and C260.

The protein belongs to the peptidase C14B family.

In terms of biological role, involved in cell death (apoptosis). Required for the apoptotic-like loss of membrane phospholipid asymmetry at stationary phase and facilitates growth under conditions of endoplasmic reticulum stress. The polypeptide is Metacaspase-1A (casA) (Aspergillus fumigatus (strain CBS 144.89 / FGSC A1163 / CEA10) (Neosartorya fumigata)).